Here is a 465-residue protein sequence, read N- to C-terminus: 2-methylcitrate synthase, mitochondrial (465 aa).

R72 and K190 together coordinate CoA. Oxaloacetate is bound at residue H265. L300 serves as a coordination point for CoA. Residue H301 is part of the active site. Residues V342, G344, and Y345 each contribute to the CoA site. 2 residues coordinate oxaloacetate: H347 and R356. Residue H347 is part of the active site. CoA-binding residues include T394, K395, and N400. D402 is a catalytic residue. Residues R428 and R448 each coordinate oxaloacetate.

Belongs to the citrate synthase family. In terms of assembly, homodimer.

The protein resides in the mitochondrion matrix. It catalyses the reaction propanoyl-CoA + oxaloacetate + H2O = (2S,3S)-2-methylcitrate + CoA + H(+). The enzyme catalyses oxaloacetate + acetyl-CoA + H2O = citrate + CoA + H(+). The protein operates within organic acid metabolism; propanoate degradation. With respect to regulation, activity is inhibited by p-chloromercuribenzoate (pCMB), monoiodoacetamide, H(2)O(2), ATP, ADP, NADH, NADPH, Hg(2+) and Zn(2+). Component of the methylcitrate cycle that catalyzes the synthesis of (2S,3S)-2-methylcitrate from propionyl-CoA and oxaloacetate. Plays an important role in detoxification of propionyl-CoA, an inhibitor of both primary and secondary metabolism. Also has citrate synthase activity using as substrates acetyl-CoA and oxaloacetate. The chain is 2-methylcitrate synthase, mitochondrial from Yarrowia lipolytica (strain CLIB 122 / E 150) (Yeast).